Consider the following 414-residue polypeptide: Enolase (414 aa).

Glutamine 162 contacts (2R)-2-phosphoglycerate. The active-site Proton donor is the glutamate 204. The Mg(2+) site is built by aspartate 239, glutamate 280, and aspartate 307. (2R)-2-phosphoglycerate-binding residues include lysine 332, arginine 361, serine 362, and lysine 383. Lysine 332 serves as the catalytic Proton acceptor.

The protein belongs to the enolase family. Mg(2+) is required as a cofactor.

The protein localises to the cytoplasm. The protein resides in the secreted. It is found in the cell surface. It catalyses the reaction (2R)-2-phosphoglycerate = phosphoenolpyruvate + H2O. It participates in carbohydrate degradation; glycolysis; pyruvate from D-glyceraldehyde 3-phosphate: step 4/5. In terms of biological role, catalyzes the reversible conversion of 2-phosphoglycerate (2-PG) into phosphoenolpyruvate (PEP). It is essential for the degradation of carbohydrates via glycolysis. The chain is Enolase from Campylobacter lari (strain RM2100 / D67 / ATCC BAA-1060).